The primary structure comprises 318 residues: Glycerol 2-dehydrogenase (NADP(+)) (318 aa).

Y52 acts as the Proton donor in catalysis. H115 contacts substrate. S217 to N277 contributes to the NADP(+) binding site.

It belongs to the aldo/keto reductase family.

It carries out the reaction glycerol + NADP(+) = dihydroxyacetone + NADPH + H(+). Functionally, glycerol oxidoreductase probably involved in glycerol synthesis. This is Glycerol 2-dehydrogenase (NADP(+)) (gld2) from Hypocrea jecorina (Trichoderma reesei).